The primary structure comprises 463 residues: Asparagine--tRNA ligase (463 aa).

This sequence belongs to the class-II aminoacyl-tRNA synthetase family. In terms of assembly, homodimer.

Its subcellular location is the cytoplasm. It catalyses the reaction tRNA(Asn) + L-asparagine + ATP = L-asparaginyl-tRNA(Asn) + AMP + diphosphate + H(+). The protein is Asparagine--tRNA ligase of Bacillus thuringiensis subsp. konkukian (strain 97-27).